Consider the following 239-residue polypeptide: Uridylate kinase (239 aa).

10–13 is an ATP binding site; sequence KLSG. Residues 18-23 form an involved in allosteric activation by GTP region; that stretch reads GEDGYG. UMP is bound at residue glycine 52. ATP-binding residues include glycine 53 and arginine 57. Residues aspartate 72 and 133–140 contribute to the UMP site; that span reads TGNPYFTT. ATP-binding residues include threonine 160, tyrosine 166, and aspartate 169.

It belongs to the UMP kinase family. As to quaternary structure, homohexamer.

The protein localises to the cytoplasm. The enzyme catalyses UMP + ATP = UDP + ADP. Its pathway is pyrimidine metabolism; CTP biosynthesis via de novo pathway; UDP from UMP (UMPK route): step 1/1. Allosterically activated by GTP. Inhibited by UTP. Catalyzes the reversible phosphorylation of UMP to UDP. The protein is Uridylate kinase of Chlorobium chlorochromatii (strain CaD3).